A 398-amino-acid chain; its full sequence is Chorismate synthase (398 aa).

The NADP(+) site is built by arginine 44 and arginine 50. FMN is bound by residues 133 to 135, 261 to 262, glycine 306, 321 to 325, and arginine 347; these read RAS, QA, and KPIPT.

The protein belongs to the chorismate synthase family. Homotetramer. The cofactor is FMNH2.

The catalysed reaction is 5-O-(1-carboxyvinyl)-3-phosphoshikimate = chorismate + phosphate. It participates in metabolic intermediate biosynthesis; chorismate biosynthesis; chorismate from D-erythrose 4-phosphate and phosphoenolpyruvate: step 7/7. In terms of biological role, catalyzes the anti-1,4-elimination of the C-3 phosphate and the C-6 proR hydrogen from 5-enolpyruvylshikimate-3-phosphate (EPSP) to yield chorismate, which is the branch point compound that serves as the starting substrate for the three terminal pathways of aromatic amino acid biosynthesis. This reaction introduces a second double bond into the aromatic ring system. The sequence is that of Chorismate synthase from Aquifex aeolicus (strain VF5).